The primary structure comprises 1292 residues: MYFNNELSNLKDHLLVTLQNNSDVERDRINFILWDLKFLDCFLHLKRLPFASECGMLEFSQKMIEIWKIQSHREPYDCPYWKEVIWKTKQEFRAEYSFPNTSLAANKVDDVSPKFVMEVIDVFVENLNVVVKINDPYSWLFVPEHKEQIEQVLKELKLLRFFVCFVSNKCIEPQYRHTTFYIHALIEASHIAMVVWLHLPVLNGIVNQYLAPSEVSRLRSDFMEMKIKSIQPDISRNNIYIDVLQALKSTIPQAQNKHAVESGIVETPTQNLTVGLSDQMVNLQEMLCFLRDNLIHLPILDLEFHLQDMDSVIVDAGLLIYSLYDIKGEKEDTVLDNMNRALGFDLPRNIEPIKAMVYLVMQKAFQSNLPRVHGLGYVDFLLKNLKDFQGRYSDSLAFLKNQLQVIQTKFESMQPFLKVVVEEPHNKLKTLNEDYATQIIRKAYEVEYVVDACINKEVPQWCIERWLLDIIEEITCIKAKIQEKNTVEDTMKSVIASSQLARTPRMNEEIVGFEDVIETLRKKLLNGTKGQDVISMHGMPGLGKTTLANRLYSDRSVVSQFDICAQCCVSQVYSYKDLLLALLRDAIGEGSVRTELHANELADMLRKTLLPRRYLILVDDVWENSVWDDLSGCFPDVNNRSRIILTTRHHEVAKYASVHSDPLHLRMFDEVESWKLLEKKVFGEESCSPLLRDIGQRIAKMCGQLPLSIVLVAGILSEMEKEVEYWEQVANNLGTHIHNDSRAVVDQSYHVLPCHLKSCFLYFGAFLEDRVIDISRLIRLWISESFVKSCEGRSLEDIAEGYLENLIGRNLVMVTQRDDSDGKVKACRLHDVLLDFCKERAAEENFLLWINRDQITKPSSCVYSHNQHAHLAFTDMKNLVEWSASCSRVGSVLFKNYDPYFAGRPLSSHAFSISRILLNFKFLKVLDLEHQVVIDSIPTELFYLRYISAHIEQNSIPSSISNLWNLETLILNRTSAATGKTLLLPSTVWDMVKLRHLHIPKFSPENKKALLKKSARLDDLETLFNPYFTRVEDAELMLRKTPNLRKLICEVQCLEYPHQYHVLNFPIRLEMLKLHQSNIFNPISFCISAPNLKYLELSGFYLDSQYLSETADHLKHLEVLKLYYVEFGDHREWKVSNGMFPQLKILKLKCVSLLKWIVADDAFPNLEQLVLRGCRHLMEIPSCFMDILSLQYIEVENCNESVVKSAMNIQETQVEDNQNTNFKLILIEIHLFYLFDMKGIESISTDMKEKKLTVTRDVDADEVQLVVEKLRNVAYADEVQLVVEKLRKRGML.

Coiled-coil stretches lie at residues aspartate 394–glutamine 414 and arginine 505–asparagine 526. An NB-ARC domain is found at arginine 505–glycine 792. Residue glycine 538–threonine 545 participates in ATP binding. LRR repeat units follow at residues alanine 842 to histidine 865, phenylalanine 920 to leucine 944, leucine 963 to methionine 991, proline 1066 to alanine 1089, tyrosine 1094 to histidine 1113, leucine 1114 to glutamine 1142, and phenylalanine 1163 to isoleucine 1187. The region spanning glutamate 1211–glutamate 1278 is the HMA domain.

It belongs to the disease resistance NB-LRR family.

Its subcellular location is the cytoplasm. The protein resides in the membrane. Functionally, confers resistance to late blight (Phytophthora infestans) races carrying the avirulence gene Avr1. Resistance proteins guard the plant against pathogens that contain an appropriate avirulence protein via an indirect interaction with this avirulence protein. That triggers a defense system including the hypersensitive response, which restricts the pathogen growth. The chain is Putative late blight resistance protein homolog R1C-3 (R1C-3) from Solanum demissum (Wild potato).